Consider the following 1018-residue polypeptide: Inner centromere protein pic1 (1018 aa).

Residue Ser-171 is modified to Phosphoserine. 8 disordered regions span residues 184 to 207 (VPLRETSPSPSETADSPNKLPKQK), 247 to 287 (RTKD…SSSP), 306 to 365 (AKES…PPEI), 522 to 556 (TRKSSNDFNSSNSRPSSNALKSDANENTDSSLPPS), 570 to 756 (EPLH…TSKP), 781 to 813 (EPDSVTSVTQPSVGSLRNNFDIGTTNSQNEDRK), 848 to 867 (TKQNGIMKGKLPSSSTSQSN), and 877 to 944 (HAPA…LPSW). Polar residues-rich tracts occupy residues 189-199 (TSPSPSETADS) and 268-287 (PSTTSDAPSSLLNTNVSSSP). The span at 309–320 (SLTSSTRLSTSY) shows a compositional bias: low complexity. Composition is skewed to polar residues over residues 329 to 339 (VAFSSETVTSS) and 522 to 554 (TRKSSNDFNSSNSRPSSNALKSDANENTDSSLP). Composition is skewed to basic and acidic residues over residues 570–580 (EPLHDDSRQNS) and 624–644 (RSSENETHRFKKFYGKERELS). Polar residues predominate over residues 645-664 (NNEFPSRQTKTVTSANSSNI). Basic and acidic residues-rich tracts occupy residues 665–679 (RDMEHTISDKPRSEP) and 692–702 (KPFEEKSEKPT). Polar residues-rich tracts occupy residues 705-719 (RLVTNPSNVNASWHS) and 784-808 (SVTSVTQPSVGSLRNNFDIGTTNSQ). Over residues 890 to 902 (PSSKSPLLKTPKS) the composition is skewed to low complexity.

It belongs to the INCENP family. In terms of assembly, component of the CPC complex at least composed of ark1, bir1 and pic1.

It localises to the nucleus. Its subcellular location is the cytoplasm. The protein localises to the cytoskeleton. The protein resides in the spindle. Component of the chromosomal passenger complex (CPC), a complex that acts as a key regulator of mitosis. Has a role in sister chromatid cohesion and condensation. This is Inner centromere protein pic1 (pic1) from Schizosaccharomyces pombe (strain 972 / ATCC 24843) (Fission yeast).